An 85-amino-acid chain; its full sequence is MAPPLSPGSRVLIGLIRVYQRLISPLLGPHCRFTPTCSSYGIEALRRFGVIKGSWLTVKRVLKCHPLHPGGDDPVPPGPFDTREH.

It belongs to the UPF0161 family.

It is found in the cell inner membrane. Its function is as follows. Could be involved in insertion of integral membrane proteins into the membrane. The chain is Putative membrane protein insertion efficiency factor from Enterobacter sp. (strain 638).